Reading from the N-terminus, the 358-residue chain is Alanine racemase (358 aa).

Lysine 35 functions as the Proton acceptor; specific for D-alanine in the catalytic mechanism. At lysine 35 the chain carries N6-(pyridoxal phosphate)lysine. Position 131 (arginine 131) interacts with substrate. The active-site Proton acceptor; specific for L-alanine is tyrosine 253. Methionine 301 contributes to the substrate binding site.

This sequence belongs to the alanine racemase family. Pyridoxal 5'-phosphate is required as a cofactor.

The catalysed reaction is L-alanine = D-alanine. Its pathway is amino-acid biosynthesis; D-alanine biosynthesis; D-alanine from L-alanine: step 1/1. In terms of biological role, catalyzes the interconversion of L-alanine and D-alanine. May also act on other amino acids. This Alteromonas mediterranea (strain DSM 17117 / CIP 110805 / LMG 28347 / Deep ecotype) protein is Alanine racemase (alr).